The following is a 107-amino-acid chain: uncharacterized protein (107 aa).

This is an uncharacterized protein from Acidianus convivator (ABV).